Consider the following 90-residue polypeptide: Progonadoliberin-1 (90 aa).

Positions 1–21 (MILKLMAGILLLTVCLEGCSS) are cleaved as a signal peptide. Q22 carries the pyrrolidone carboxylic acid modification. At G31 the chain carries Glycine amide.

It belongs to the GnRH family. Post-translationally, the precursor is cleaved by ACE, which removes the Gly-Lys-Arg peptide at the C-terminus, leading to mature hormone. The mature form of Gonadoliberin-1 is also cleaved and degraded by ACE.

The protein localises to the secreted. Stimulates the secretion of gonadotropins; it stimulates the secretion of both luteinizing and follicle-stimulating hormones. The polypeptide is Progonadoliberin-1 (Gnrh1) (Mus musculus (Mouse)).